A 745-amino-acid chain; its full sequence is Cullin-2 (745 aa).

N6-acetyllysine is present on Lys393. The residue at position 661 (Thr661) is a Phosphothreonine. The Cullin neddylation domain maps to 675 to 735 (DRKMYLQAAI…IDKQYIERSQ (61 aa)). A Glycyl lysine isopeptide (Lys-Gly) (interchain with G-Cter in NEDD8) cross-link involves residue Lys689.

The protein belongs to the cullin family. As to quaternary structure, component of multiple Cul2-RING (CRL2) E3 ubiquitin-protein ligase complexes consisting of CUL2, Elongin BC (ELOB and ELOC), RBX1 and a variable substrate-specific adapter; this complex is also known as ECS (Elongin BC-CUL2/5-SOCS-box protein) complex and may consist of CUL2 or CUL5. Component of the ECS(VHL) or CBC(VHL) complex containing CUL2, RBX1, ELOB, ELOC and VHL. Component of the ECS(MED8) complex with the probable substrate recognition component MED8. Component of multiple ECS complexes part of the DesCEND (destruction via C-end degrons) pathway, which contain either KLHDC2, KLHDC3, KLHDC10, APPBP2, FEM1A, FEM1B or FEM1C as substrate-recognition component. Component of the ECS(LRR1) complex with the substrate recognition component LRR1. Component of a CRL2(FEM1B) complex containing CUL2, RBX1, ELOB, ELOC and FEM1B. Component of a CRL2(FEM1C) complex containing CUL2, RBX1, ELOB, ELOC and FEM1C. Part of an E3 ubiquitin-protein ligase complex including ZYG11B, CUL2 and Elongin BC. Part of an E3 ubiquitin-protein ligase complex including ZER1, CUL2 and Elongin BC. Interacts with RBX1, RNF7, FEM1B and TIP120A/CAND1. Found in a complex composed of LIMD1, VHL, EGLN1/PHD2, ELOB and CUL2. Interacts (when neddylated) with ARIH1; leading to activate the E3 ligase activity of ARIH1. Interacts (unneddylated form) with DCUN1D1, DCUN1D2, DCUN1D3, DCUN1D4 and DCUN1D5; these interactions promote the cullin neddylation. Component of VCB (elongins BC/CUL2/VHL) complex that contains at least DCUN1D1, CUL2 and VHL; this complex triggers CUL2 neddylation and consequently cullin ring ligase (CRL) substrates polyubiquitylation. In terms of processing, neddylated; which enhances the ubiquitination activity of ECS (Elongin BC-CUL2/5-SOCS-box protein) E3 ubiquitin-protein ligase complexes. Neddylation leads to structural rearrangment in the complex that allows interaction between the E2 ubiquitin-conjugating enzyme and the acceptor ubiquitin. CBC(VHL) complex formation seems to promote neddylation. Deneddylated via its interaction with the COP9 signalosome (CSN) complex.

The protein localises to the nucleus. Its pathway is protein modification; protein ubiquitination. Its function is as follows. Core component of multiple cullin-RING-based ECS (ElonginB/C-CUL2/5-SOCS-box protein) E3 ubiquitin-protein ligase complexes, which mediate the ubiquitination of target proteins. CUL2 may serve as a rigid scaffold in the complex and may contribute to catalysis through positioning of the substrate and the ubiquitin-conjugating enzyme. The E3 ubiquitin-protein ligase activity of the complex is dependent on the neddylation of the cullin subunit and is inhibited by the association of the deneddylated cullin subunit with TIP120A/CAND1. The functional specificity of the ECS complex depends on the substrate recognition component. ECS(VHL) mediates the ubiquitination of hypoxia-inducible factor (HIF). A number of ECS complexes (containing either KLHDC2, KLHDC3, KLHDC10, APPBP2, FEM1A, FEM1B or FEM1C as substrate-recognition component) are part of the DesCEND (destruction via C-end degrons) pathway, which recognizes a C-degron located at the extreme C terminus of target proteins, leading to their ubiquitination and degradation. ECS complexes and ARIH1 collaborate in tandem to mediate ubiquitination of target proteins. ECS(LRR1) ubiquitinates MCM7 and promotes CMG replisome disassembly by VCP and chromatin extraction during S-phase. This Pongo abelii (Sumatran orangutan) protein is Cullin-2 (CUL2).